The sequence spans 114 residues: Small ribosomal subunit protein uS17 (114 aa).

The protein belongs to the universal ribosomal protein uS17 family. In terms of assembly, part of the 30S ribosomal subunit.

Its function is as follows. One of the primary rRNA binding proteins, it binds specifically to the 5'-end of 16S ribosomal RNA. This is Small ribosomal subunit protein uS17 from Saccharolobus solfataricus (strain ATCC 35092 / DSM 1617 / JCM 11322 / P2) (Sulfolobus solfataricus).